The following is a 398-amino-acid chain: Keratinocyte differentiation factor 1 (398 aa).

Disordered regions lie at residues 1–60 and 123–156; these read MPRP…SITF and AEANWAKEHNGVPPSPDRAPPSRRDGQRLKSTMG. Residues 44 to 55 show a composition bias toward basic and acidic residues; sequence RPDPKDPGHHGP. Serine 218 carries the phosphoserine modification. Disordered stretches follow at residues 307–340 and 369–392; these read RKSRARPQTSEGRSTRAAAPTAAAPDSGHETMVG and GAPGYPASHDSSFQGTDTDSSGAP. Residues 377 to 389 are compositionally biased toward polar residues; sequence HDSSFQGTDTDSS.

It localises to the cytoplasm. The protein resides in the cell junction. In terms of biological role, plays a role in the regulation of the epidermis formation during early development. Required both as an inhibitor of basal cell proliferation and a promoter of differentiation of basal progenitor cell progeny. The sequence is that of Keratinocyte differentiation factor 1 (KDF1) from Homo sapiens (Human).